The following is a 366-amino-acid chain: MAGDSFGTLFRFTSFGESHGPAIGCVVEGVPPGIPLTAADLQHDLDRRKPGQSRFTTQRREDDAAEILSGVYEGVTTGTPIAVLIRNTDQRSKDYSDIAQRFRPGHADYTYWVKYGVRDPRGGGRSSARETAVRVAAGAIARKVLTSVLGRPLTIRAAVVEMGGLAIERANWDWLSVDANPFFSPDAAMVAPWEALLDGVRRDGSSVGAVVEVVAEGVPPGLGEPVYDRLDADLAKALMSINAVKGVEIGAGFEAARLRGESNADEMLPNGLGGVRFTSNNAGGVLGGISTGQTIIARLAVKPTSSIMIPRQSVDTQGRPVDVVTKGRHDPCVGIRAVPVAEAMVAVVLADHLLRFRGQCGLPVGL.

NADP(+) is bound by residues Arg48 and Arg54. Residues 125–127 (RSS), 242–243 (NA), Gly287, 302–306 (KPTSS), and Arg328 contribute to the FMN site.

This sequence belongs to the chorismate synthase family. As to quaternary structure, homotetramer. It depends on FMNH2 as a cofactor.

The catalysed reaction is 5-O-(1-carboxyvinyl)-3-phosphoshikimate = chorismate + phosphate. It participates in metabolic intermediate biosynthesis; chorismate biosynthesis; chorismate from D-erythrose 4-phosphate and phosphoenolpyruvate: step 7/7. In terms of biological role, catalyzes the anti-1,4-elimination of the C-3 phosphate and the C-6 proR hydrogen from 5-enolpyruvylshikimate-3-phosphate (EPSP) to yield chorismate, which is the branch point compound that serves as the starting substrate for the three terminal pathways of aromatic amino acid biosynthesis. This reaction introduces a second double bond into the aromatic ring system. The chain is Chorismate synthase from Rhodospirillum rubrum (strain ATCC 11170 / ATH 1.1.1 / DSM 467 / LMG 4362 / NCIMB 8255 / S1).